The primary structure comprises 631 residues: Arginine--tRNA ligase (631 aa).

Residues 132–142 (PNIAKPLHVGH) carry the 'HIGH' region motif.

The protein belongs to the class-I aminoacyl-tRNA synthetase family.

The protein localises to the cytoplasm. The enzyme catalyses tRNA(Arg) + L-arginine + ATP = L-arginyl-tRNA(Arg) + AMP + diphosphate. This chain is Arginine--tRNA ligase, found in Halobacterium salinarum (strain ATCC 700922 / JCM 11081 / NRC-1) (Halobacterium halobium).